A 245-amino-acid polypeptide reads, in one-letter code: Small ribosomal subunit protein uS2 (245 aa).

The protein belongs to the universal ribosomal protein uS2 family.

The protein is Small ribosomal subunit protein uS2 of Pseudomonas fluorescens (strain Pf0-1).